Here is a 128-residue protein sequence, read N- to C-terminus: 3-aminoacrylate deaminase RutC (128 aa).

This sequence belongs to the RutC family. In terms of assembly, homotrimer.

The enzyme catalyses (Z)-3-aminoacrylate + H2O + H(+) = 3-oxopropanoate + NH4(+). Involved in pyrimidine catabolism. Catalyzes the deamination of 3-aminoacrylate to malonic semialdehyde, a reaction that can also occur spontaneously. RutC may facilitate the reaction and modulate the metabolic fitness, rather than catalyzing essential functions. This Escherichia coli O157:H7 protein is 3-aminoacrylate deaminase RutC.